The sequence spans 377 residues: Probable aspartic-type endopeptidase CTSD (377 aa).

In terms of domain architecture, Peptidase A1 spans 1 to 292 (SLIDTGASRT…DFDKNRVGLA (292 aa)). Aspartate 4 is a catalytic residue. N-linked (GlcNAc...) asparagine glycosylation is present at asparagine 58. Aspartate 186 is a catalytic residue. The interval 296-351 (YGETKDPPSSSHPPPAPTSNKASGGSPGLPEQSGTSSATTSTTGEPSSGSTASPSA) is disordered. Positions 328-351 (SGTSSATTSTTGEPSSGSTASPSA) are enriched in low complexity. The GPI-anchor amidated serine moiety is linked to residue serine 350. Residues 351–377 (AASSVSMSAWLSLAVFLSTASSLILWD) constitute a propeptide, removed in mature form.

The protein belongs to the peptidase A1 family.

Its subcellular location is the cell membrane. In terms of biological role, secreted aspartic-type endopeptidase which is secreted and contributes to virulence. This chain is Probable aspartic-type endopeptidase CTSD (CTSD), found in Arthroderma otae (strain ATCC MYA-4605 / CBS 113480) (Microsporum canis).